Here is a 334-residue protein sequence, read N- to C-terminus: Holliday junction branch migration complex subunit RuvB (334 aa).

The segment at 4-184 (ADRLIQPQLQ…FGIPLRLEFY (181 aa)) is large ATPase domain (RuvB-L). ATP-binding positions include R24, G65, K68, T69, T70, 131-133 (EDY), R174, Y184, and R221. T69 provides a ligand contact to Mg(2+). Residues 185 to 255 (NVKDLSTIVS…VAEHALDLLD (71 aa)) form a small ATPAse domain (RuvB-S) region. The head domain (RuvB-H) stretch occupies residues 258 to 334 (GEGFDYMDRK…YLHFGMIKPE (77 aa)). Residues R294, R313, and R318 each contribute to the DNA site.

This sequence belongs to the RuvB family. Homohexamer. Forms an RuvA(8)-RuvB(12)-Holliday junction (HJ) complex. HJ DNA is sandwiched between 2 RuvA tetramers; dsDNA enters through RuvA and exits via RuvB. An RuvB hexamer assembles on each DNA strand where it exits the tetramer. Each RuvB hexamer is contacted by two RuvA subunits (via domain III) on 2 adjacent RuvB subunits; this complex drives branch migration. In the full resolvosome a probable DNA-RuvA(4)-RuvB(12)-RuvC(2) complex forms which resolves the HJ.

Its subcellular location is the cytoplasm. It catalyses the reaction ATP + H2O = ADP + phosphate + H(+). In terms of biological role, the RuvA-RuvB-RuvC complex processes Holliday junction (HJ) DNA during genetic recombination and DNA repair, while the RuvA-RuvB complex plays an important role in the rescue of blocked DNA replication forks via replication fork reversal (RFR). RuvA specifically binds to HJ cruciform DNA, conferring on it an open structure. The RuvB hexamer acts as an ATP-dependent pump, pulling dsDNA into and through the RuvAB complex. RuvB forms 2 homohexamers on either side of HJ DNA bound by 1 or 2 RuvA tetramers; 4 subunits per hexamer contact DNA at a time. Coordinated motions by a converter formed by DNA-disengaged RuvB subunits stimulates ATP hydrolysis and nucleotide exchange. Immobilization of the converter enables RuvB to convert the ATP-contained energy into a lever motion, pulling 2 nucleotides of DNA out of the RuvA tetramer per ATP hydrolyzed, thus driving DNA branch migration. The RuvB motors rotate together with the DNA substrate, which together with the progressing nucleotide cycle form the mechanistic basis for DNA recombination by continuous HJ branch migration. Branch migration allows RuvC to scan DNA until it finds its consensus sequence, where it cleaves and resolves cruciform DNA. This chain is Holliday junction branch migration complex subunit RuvB, found in Shewanella sp. (strain MR-7).